The sequence spans 261 residues: Acetylglutamate kinase (261 aa).

Substrate is bound by residues 45-46, R67, and N162; that span reads GG.

It belongs to the acetylglutamate kinase family. ArgB subfamily.

Its subcellular location is the cytoplasm. It catalyses the reaction N-acetyl-L-glutamate + ATP = N-acetyl-L-glutamyl 5-phosphate + ADP. It participates in amino-acid biosynthesis; L-arginine biosynthesis; N(2)-acetyl-L-ornithine from L-glutamate: step 2/4. In terms of biological role, catalyzes the ATP-dependent phosphorylation of N-acetyl-L-glutamate. This Bacteroides fragilis (strain ATCC 25285 / DSM 2151 / CCUG 4856 / JCM 11019 / LMG 10263 / NCTC 9343 / Onslow / VPI 2553 / EN-2) protein is Acetylglutamate kinase.